A 493-amino-acid polypeptide reads, in one-letter code: Ectonucleotide pyrophosphatase/phosphodiesterase 2 (493 aa).

The Cytoplasmic portion of the chain corresponds to 1-28 (MLLFEQPVDLEKNNEDDTNIKPFAISRH). Residues 29-45 (FLLKLLLCGIILIELLL) form a helical; Signal-anchor for type II membrane protein membrane-spanning segment. Over 46–493 (YSKCPKPIDN…KTKKEKSLLQ (448 aa)) the chain is Extracellular. N62, N69, and N112 each carry an N-linked (GlcNAc...) asparagine glycan. A phosphodiesterase region spans residues 76 to 438 (TLTILISIDG…IGIMGTHGYN (363 aa)). T127 acts as the Nucleophile in catalysis. N-linked (GlcNAc...) asparagine glycosylation is found at N153 and N441.

This sequence belongs to the nucleotide pyrophosphatase/phosphodiesterase family. Autophosphorylated as part of the catalytic cycle of phosphodiesterase/pyrophosphatase activity.

It is found in the membrane. It catalyses the reaction Hydrolytically removes 5'-nucleotides successively from the 3'-hydroxy termini of 3'-hydroxy-terminated oligonucleotides.. The catalysed reaction is a ribonucleoside 5'-triphosphate + H2O = a ribonucleoside 5'-phosphate + diphosphate + H(+). It carries out the reaction a 2'-deoxyribonucleoside 5'-triphosphate + H2O = a 2'-deoxyribonucleoside 5'-phosphate + diphosphate + H(+). Mediates extracellular nucleotide derived phosphate hydrolysis along with NPP1 and PHO5. The chain is Ectonucleotide pyrophosphatase/phosphodiesterase 2 (NPP2) from Saccharomyces cerevisiae (strain ATCC 204508 / S288c) (Baker's yeast).